The following is a 425-amino-acid chain: Intermediate conductance calcium-activated potassium channel protein 4 (425 aa).

The chain crosses the membrane as a helical span at residues 30–50; that stretch reads LVLAGTGIGLMVLHAEMLWFL. The chain crosses the membrane as a helical span at residues 59 to 79; it reads LLVKCLITLSTAFLLCLIVVF. A helical membrane pass occupies residues 105–121; that stretch reads VAQILLELLVCGVHPVP. A helical transmembrane segment spans residues 141 to 161; it reads GFLGEGEALLSLAMLLRLYLV. Residues 205–225 form a helical membrane-spanning segment; sequence LLLGLTLGLWLTTAWVLSVAE. The segment at residues 239 to 259 is an intramembrane region (pore-forming); it reads LWLIPITFLTIGYGDVVPGTL. The helical transmembrane segment at 263-283 threads the bilayer; it reads IVCLCTGVMGVCCTALLVAVV. The interval 284 to 345 is calmodulin-binding; that stretch reads ARKLEFNKAE…RRHQRKMLAA (62 aa). H356 is subject to Phosphohistidine.

Belongs to the potassium channel KCNN family. KCa3.1/KCNN4 subfamily. In terms of assembly, homodimer. Homotetramer. Heterotetramer of potassium channel proteins. Interacts with MTMR6; this interaction leads to selective dephosphorylation of PI(3)P in a lipid microdomain adjacent to KCNN4, resulting in a decrease of intermediate conductance calcium-activated potassium channel activity. Interacts (via the C-tail domain) with CALM1; the calmodulin binding is constitutive, does not require calcium and mediates calcium-dependent gating and four calmodulin molecules bind to one channel tetramer. Post-translationally, phosphorylation at His-356 by NDKB activates the intermediate conductance calcium-activated potassium channel activity, and conversely it's dephosphorylation by PHPT1 inhibits this activity.

The protein resides in the cell membrane. It is found in the cell projection. The protein localises to the ruffle membrane. The catalysed reaction is K(+)(in) = K(+)(out). Intermediate conductance calcium-activated potassium channel that mediates the voltage-independent transmembrane transfer of potassium across the cell membrane through a constitutive interaction with calmodulin which binds the intracellular calcium allowing its opening. The current is characterized by a voltage-independent activation, an intracellular calcium concentration increase-dependent activation and a single-channel conductance of about 25 picosiemens. Also presents an inwardly rectifying current, thus reducing its already small outward conductance of potassium ions, which is particularly the case when the membrane potential displays positive values, above + 20 mV. Controls calcium influx during vascular contractility by being responsible of membrane hyperpolarization induced by vasoactive factors in proliferative vascular smooth muscle cell types. Following calcium influx, the consecutive activation of KCNN4 channel leads to a hyperpolarization of the cell membrane potential and hence an increase of the electrical driving force for further calcium influx promoting sustained calcium entry in response to stimulation with chemotactic peptides. Required for maximal calcium influx and proliferation during the reactivation of naive T-cells. Plays a role in the late stages of EGF-induced macropinocytosis through activation by PI(3)P. This chain is Intermediate conductance calcium-activated potassium channel protein 4, found in Rattus norvegicus (Rat).